A 134-amino-acid chain; its full sequence is Profilin-2 (134 aa).

A disulfide bridge links cysteine 13 with cysteine 118. The Involved in PIP2 interaction signature appears at 84–100 (AVIRGKKGSGGITIKKT). Threonine 114 is modified (phosphothreonine).

This sequence belongs to the profilin family. Occurs in many kinds of cells as a complex with monomeric actin in a 1:1 ratio. Post-translationally, phosphorylated by MAP kinases.

It is found in the cytoplasm. It localises to the cytoskeleton. Its function is as follows. Binds to actin and affects the structure of the cytoskeleton. At high concentrations, profilin prevents the polymerization of actin, whereas it enhances it at low concentrations. This chain is Profilin-2, found in Olea europaea (Common olive).